We begin with the raw amino-acid sequence, 156 residues long: Small ribosomal subunit protein uS7 (156 aa).

This sequence belongs to the universal ribosomal protein uS7 family. In terms of assembly, part of the 30S ribosomal subunit. Contacts proteins S9 and S11.

One of the primary rRNA binding proteins, it binds directly to 16S rRNA where it nucleates assembly of the head domain of the 30S subunit. Is located at the subunit interface close to the decoding center, probably blocks exit of the E-site tRNA. This Streptococcus suis (strain 98HAH33) protein is Small ribosomal subunit protein uS7.